Here is a 464-residue protein sequence, read N- to C-terminus: Formin-like protein 19 (464 aa).

The interval 1 to 74 (MSLVDISGAY…PRPCSRPPKT (74 aa)) is disordered. Pro residues predominate over residues 14-70 (PLPPPPPPLMRRRAPLPPPPPPPLMRRRAPPPPPPPLMRRRAPPPPPPPPLPRPCSR). In terms of domain architecture, FH2 spans 68–462 (CSRPPKTKCS…KAAKEAEMEK (395 aa)).

It belongs to the formin-like family. Class-II subfamily.

The sequence is that of Formin-like protein 19 (FH19) from Arabidopsis thaliana (Mouse-ear cress).